The primary structure comprises 662 residues: MFNEKDQLAVDTLRALSIDTIEKANSGHPGLPMGAAPMAYTLWTRHLNFNPQSKDYFNRDRFVLSAGHGSALLYSLLHVSGSLELEELKQFRQWGSKTPGHPEYRHTDGVEVTTGPLGQGFSMSVGLALAEDHLAGKFNKEGYNVVDHYTYVLASDGDLMEGISHEAASFAGHNKLSKLVVLYDSNDISLDGELNKAFSENTKARFEAYGWNYLLVKDGNDLEEIDKAITTAKSQEGPTIIEVKTTIGFGSPNKAGTNGVHGAPLGEDERKLTFENYGLDPEKRFNVSEEVYEIFQNTMLKRANEDESQWNSLLEKYAETYPELAEEFKLAISGKLPKNYKDELPRFEFGHNGASRADSGTVIQAISKTVPSFFGGSADLAGSNKSNVNDATDYSSETPEGKNVWFGVREFAMGAAVNGMAAHGGLHPYGATFFVFSDYLKPALRLSSIMGLNATFIFTHDSIAVGEDGPTHEPIEQLAGLRAIPNMNVIRPADGNETRVAWEVALESESTPTSLVLTRQNLPVLDVPEDVVEEGVRKGAYTVYGSEETPEFLLLASGSEVSLAVEAAKDLEKQGKSVRVVSMPNWNAFEQQSEEYKESVIPSSVTKRVAIEMASPLGWHKYVGTAGKVIAIDGFGASAPGDLVVEKYGFTKENILNQVMSL.

His-28 is a substrate binding site. Residues His-68 and 115-117 contribute to the thiamine diphosphate site; that span reads GPL. Asp-156 contributes to the Mg(2+) binding site. Residues Gly-157 and Asn-186 each contribute to the thiamine diphosphate site. Residues Asn-186 and Ile-188 each contribute to the Mg(2+) site. Residues His-261, Arg-356, and Ser-383 each contribute to the substrate site. Residue His-261 coordinates thiamine diphosphate. Residue Glu-410 is the Proton donor of the active site. Thiamine diphosphate is bound at residue Phe-436. Positions 460, 468, and 519 each coordinate substrate.

Belongs to the transketolase family. In terms of assembly, homodimer. It depends on Mg(2+) as a cofactor. The cofactor is Ca(2+). Mn(2+) serves as cofactor. Requires Co(2+) as cofactor. Thiamine diphosphate is required as a cofactor.

The enzyme catalyses D-sedoheptulose 7-phosphate + D-glyceraldehyde 3-phosphate = aldehydo-D-ribose 5-phosphate + D-xylulose 5-phosphate. It functions in the pathway carbohydrate biosynthesis; Calvin cycle. It participates in carbohydrate degradation; pentose phosphate pathway. Functionally, catalyzes the transfer of a two-carbon ketol group from a ketose donor to an aldose acceptor, via a covalent intermediate with the cofactor thiamine pyrophosphate. The sequence is that of Transketolase (tkt) from Staphylococcus aureus (strain MRSA252).